The sequence spans 301 residues: Acetylglutamate kinase (301 aa).

Substrate-binding positions include 68-69 (GG), R90, and N195.

The protein belongs to the acetylglutamate kinase family. ArgB subfamily.

The protein resides in the cytoplasm. It carries out the reaction N-acetyl-L-glutamate + ATP = N-acetyl-L-glutamyl 5-phosphate + ADP. Its pathway is amino-acid biosynthesis; L-arginine biosynthesis; N(2)-acetyl-L-ornithine from L-glutamate: step 2/4. Functionally, catalyzes the ATP-dependent phosphorylation of N-acetyl-L-glutamate. The protein is Acetylglutamate kinase of Pseudomonas entomophila (strain L48).